The chain runs to 737 residues: MAKISGLCVFKWYPLYAYQCPATGPSVQLKYSAMTPRHNNNVNHVYNGPDIQWEDESLRPPPAPRLFSRSSYASYASKASKRSFYSYTSSCFEADDERSDTLSFADWITTTMSGRMSPANAGDNSDSYPYGDDTDGDSSSGLPPPRYPGDDTRPTSQKELAGWYAYAFAAEVYVICGIGSFIPILLESLARENGVLLSDRSKPCGSSSDKHTTSAEGQCVVYVLGMEINTASFAMYTFSVSVLLQALLVVSISCAADHGNFRKKLLLAFAWIGSACVMAYIFISKSTYLIGALLAIISNTSFGASFVLLNSFLPLLVRHHPEIDQVGDYGSPGYATTEEGDDEDDEYQEDSTRNSTTALLGSRRYEEGEPLSRVQTTEELTSRELELSTQISAKGIGIGYIAGLFLQCVAIAILITLKNTTWSQRIVLCVIGAWWAIFTIPAAMWLRPRPGPPLPTKSNTGGIRALFHYTIYAWKSLFRTIHLARRLVDIVLFLAGWFLLSDAIATTSSTAILFAKTQLHMEPWALGMINVISTASGILGAFSWSFISRKFRLKAHQTILACIALFELIPLYGLMGYLPFVQAWGVGGLQQPWEMYPLAAIYGFVLGGLSGYCRSLYGELIPPGSEAAFYALYAITDKGSSVFGPAIVGAIIDASGEIRPAFWFLAAIVGTPALFIWFINVERGRTEGEALAEIIEGFKMNGQNGLNGNGADGLADDRRGSDASRAILGRYDDEDEE.

Positions 115-154 are disordered; it reads RMSPANAGDNSDSYPYGDDTDGDSSSGLPPPRYPGDDTRP. A compositionally biased stretch (low complexity) spans 125 to 141; that stretch reads SDSYPYGDDTDGDSSSG. Helical transmembrane passes span 166 to 186, 232 to 252, 264 to 284, and 289 to 309; these read YAFA…PILL, SFAM…VVSI, KLLL…IFIS, and LIGA…FVLL. Residues 327-353 form a disordered region; sequence GDYGSPGYATTEEGDDEDDEYQEDSTR. Acidic residues predominate over residues 338 to 349; it reads EEGDDEDDEYQE. N-linked (GlcNAc...) asparagine glycosylation occurs at N354. The chain crosses the membrane as a helical span at residues 395–415; sequence GIGIGYIAGLFLQCVAIAILI. A glycan (N-linked (GlcNAc...) asparagine) is linked at N419. 7 helical membrane-spanning segments follow: residues 426–446, 487–507, 524–544, 559–579, 593–613, 632–652, and 661–681; these read IVLC…AMWL, LVDI…IATT, WALG…AFSW, ILAC…GYLP, WEMY…SGYC, LYAI…GAII, and AFWF…FINV.

It belongs to the ATG22 family.

It localises to the vacuole membrane. Its function is as follows. Vacuolar effluxer which mediate the efflux of amino acids resulting from autophagic degradation. The release of autophagic amino acids allows the maintenance of protein synthesis and viability during nitrogen starvation. This is Autophagy-related protein 22 (apg-11) from Neurospora crassa (strain ATCC 24698 / 74-OR23-1A / CBS 708.71 / DSM 1257 / FGSC 987).